A 324-amino-acid chain; its full sequence is Phosphomevalonate decarboxylase (324 aa).

It belongs to the phosphomevalonate decarboxylase family.

The catalysed reaction is (R)-5-phosphomevalonate + ATP = isopentenyl phosphate + ADP + phosphate + CO2. Is strongly inhibited by 6-fluoromevalonate monophosphate but shows negligible inhibition by 6-fluoromevalonate diphosphate (a potent inhibitor of the classical mevalonate pathway). Its function is as follows. Catalyzes the decarboxylation of mevalonate 5-phosphate (MVAP) to isopentenyl phosphate (IP). Functions in an alternate mevalonate (MVA) pathway leading to isopentenyl diphosphate (IPP), a key precursor for the biosynthesis of isoprenoid compounds such as archaeal membrane lipids. This is Phosphomevalonate decarboxylase (mvaD) from Haloferax volcanii (strain ATCC 29605 / DSM 3757 / JCM 8879 / NBRC 14742 / NCIMB 2012 / VKM B-1768 / DS2) (Halobacterium volcanii).